Consider the following 210-residue polypeptide: Ribosomal RNA large subunit methyltransferase E (210 aa).

The S-adenosyl-L-methionine site is built by G61, W63, D81, D97, and D122. The active-site Proton acceptor is K162.

The protein belongs to the class I-like SAM-binding methyltransferase superfamily. RNA methyltransferase RlmE family.

The protein resides in the cytoplasm. The enzyme catalyses uridine(2552) in 23S rRNA + S-adenosyl-L-methionine = 2'-O-methyluridine(2552) in 23S rRNA + S-adenosyl-L-homocysteine + H(+). Its function is as follows. Specifically methylates the uridine in position 2552 of 23S rRNA at the 2'-O position of the ribose in the fully assembled 50S ribosomal subunit. In Xanthomonas campestris pv. campestris (strain 8004), this protein is Ribosomal RNA large subunit methyltransferase E.